The following is a 189-amino-acid chain: Accessory gene regulator protein B (189 aa).

5 helical membrane-spanning segments follow: residues 50-70, 83-103, 105-125, 143-163, and 164-184; these read VSLLCHMFLYTLTVHLTFFFI, LLCYIQSVIYFVLLPWIVGYV, VSSLIMYTLALVGLIIISIYA, KIKAICLTLIFLLISLFLNEP, and YQQLMLLGIVIISILQFPIFF.

This sequence belongs to the AgrB family.

The protein resides in the cell membrane. Essential for the production of a quorum sensing system signal molecule, the autoinducing peptide (AIP). This quorum sensing system is responsible for the regulation of the expression of virulence factor genes. Involved in the proteolytic processing of AgrD, the precursor of AIP. The protein is Accessory gene regulator protein B of Staphylococcus saprophyticus subsp. saprophyticus (strain ATCC 15305 / DSM 20229 / NCIMB 8711 / NCTC 7292 / S-41).